The primary structure comprises 382 residues: Histidinol-phosphate aminotransferase (382 aa).

Lys215 bears the N6-(pyridoxal phosphate)lysine mark. The segment at Asn360–Ile382 is disordered.

This sequence belongs to the class-II pyridoxal-phosphate-dependent aminotransferase family. Histidinol-phosphate aminotransferase subfamily. In terms of assembly, homodimer. It depends on pyridoxal 5'-phosphate as a cofactor.

It carries out the reaction L-histidinol phosphate + 2-oxoglutarate = 3-(imidazol-4-yl)-2-oxopropyl phosphate + L-glutamate. The protein operates within amino-acid biosynthesis; L-histidine biosynthesis; L-histidine from 5-phospho-alpha-D-ribose 1-diphosphate: step 7/9. In Yersinia pseudotuberculosis serotype IB (strain PB1/+), this protein is Histidinol-phosphate aminotransferase.